We begin with the raw amino-acid sequence, 513 residues long: Xylose import ATP-binding protein XylG (513 aa).

ABC transporter domains lie at 5-242 (LEMK…VGRE) and 259-505 (LRIE…LRSE). 37 to 44 (GENGSGKS) serves as a coordination point for ATP.

The protein belongs to the ABC transporter superfamily. Xylose importer (TC 3.A.1.2.4) family. The complex is composed of two ATP-binding proteins (XylG), two transmembrane proteins (XylH) and a solute-binding protein (XylF).

The protein resides in the cell inner membrane. It carries out the reaction D-xylose(out) + ATP + H2O = D-xylose(in) + ADP + phosphate + H(+). Functionally, part of the ABC transporter complex XylFGH involved in xylose import. Responsible for energy coupling to the transport system. The protein is Xylose import ATP-binding protein XylG of Escherichia coli (strain UTI89 / UPEC).